The primary structure comprises 95 residues: uncharacterized protein (95 aa).

A coiled-coil region spans residues 14-50; sequence KMEQKLQEQLDGLLEKYTELLLGETNDELKEEVKQWI.

This is an uncharacterized protein from Bacillus subtilis (strain 168).